The primary structure comprises 762 residues: 1-phosphatidylinositol 4,5-bisphosphate phosphodiesterase delta-4 (762 aa).

The PH domain occupies 16-124 (LLMQEGMPMR…WMRGLQLLVD (109 aa)). The substrate binding stretch occupies residues 26–53 (KVRSKSWKKLRYFRLQNDGMTVWHARQA). 3 EF-hand domains span residues 134 to 169 (RLDQ…MNVE), 170 to 205 (MDQE…LTKR), and 206 to 237 (AEVQ…EQKE). Ca(2+)-binding residues include D147, N149, D151, K153, E158, D183, S185, S187, T189, and E194. The GBA motif lies at 213–243 (ESFSADGQKLTLLEFLDFLREEQKERDCTSE). Residues 290–435 (QDMTQPLNHY…LRRRILVKGK (146 aa)) enclose the PI-PLC X-box domain. The active site involves H305. Positions 306, 335, and 337 each coordinate Ca(2+). H350 is an active-site residue. E384 provides a ligand contact to Ca(2+). Residues K433 and K435 each coordinate substrate. Positions 443 to 471 (LEYEEEEAEPELEESELALESQFETEPEP) are enriched in acidic residues. Residues 443–483 (LEYEEEEAEPELEESELALESQFETEPEPQEQNLQSKDKKK) are disordered. S457 carries the phosphoserine modification. The PI-PLC Y-box domain occupies 493-609 (LSSLVIYLKS…GYVLKPDFLR (117 aa)). 2 residues coordinate substrate: S522 and R549. Positions 609 to 736 (RDIQSSFHPE…QGYRHIHLLS (128 aa)) constitute a C2 domain. I650, D652, N676, D705, Y706, and D707 together coordinate Ca(2+). A PDZ-binding motif is present at residues 731–734 (HIHL).

Interacts with GRIP1. Interacts (via GBA motif) with guanine nucleotide-binding protein G(i) alpha subunit GNAI3 (inactive GDP-bound form); low-affinity interaction. Requires Ca(2+) as cofactor.

Its subcellular location is the membrane. It is found in the nucleus. The protein resides in the cytoplasm. It localises to the endoplasmic reticulum. It carries out the reaction a 1,2-diacyl-sn-glycero-3-phospho-(1D-myo-inositol-4,5-bisphosphate) + H2O = 1D-myo-inositol 1,4,5-trisphosphate + a 1,2-diacyl-sn-glycerol + H(+). The catalysed reaction is a 1,2-diacyl-sn-glycero-3-phospho-(1D-myo-inositol) + H2O = 1D-myo-inositol 1-phosphate + a 1,2-diacyl-sn-glycerol + H(+). Its function is as follows. Hydrolyzes the phosphatidylinositol 4,5-bisphosphate (PIP2) to generate 2 second messenger molecules diacylglycerol (DAG) and inositol 1,4,5-trisphosphate (IP3). DAG mediates the activation of protein kinase C (PKC), while IP3 releases Ca(2+) from intracellular stores. Required for acrosome reaction in sperm during fertilization, probably by acting as an important enzyme for intracellular Ca(2+) mobilization in the zona pellucida-induced acrosome reaction. May play a role in cell growth. Modulates the liver regeneration in cooperation with nuclear PKC. Overexpression up-regulates the Erk signaling pathway and proliferation. In Pongo abelii (Sumatran orangutan), this protein is 1-phosphatidylinositol 4,5-bisphosphate phosphodiesterase delta-4 (PLCD4).